The primary structure comprises 303 residues: N-acetyl-D-glucosamine kinase (303 aa).

ATP contacts are provided by residues 4–11 (GFDIGGTK) and 133–140 (GVGGGLIF). His157, Cys177, Cys179, and Cys184 together coordinate Zn(2+).

The protein belongs to the ROK (NagC/XylR) family. NagK subfamily.

The catalysed reaction is N-acetyl-D-glucosamine + ATP = N-acetyl-D-glucosamine 6-phosphate + ADP + H(+). The protein operates within cell wall biogenesis; peptidoglycan recycling. Functionally, catalyzes the phosphorylation of N-acetyl-D-glucosamine (GlcNAc) derived from cell-wall degradation, yielding GlcNAc-6-P. In Escherichia coli O157:H7, this protein is N-acetyl-D-glucosamine kinase.